The following is a 506-amino-acid chain: Lysine--tRNA ligase (506 aa).

Mg(2+)-binding residues include E411 and E418.

This sequence belongs to the class-II aminoacyl-tRNA synthetase family. As to quaternary structure, homodimer. Mg(2+) is required as a cofactor.

It localises to the cytoplasm. The catalysed reaction is tRNA(Lys) + L-lysine + ATP = L-lysyl-tRNA(Lys) + AMP + diphosphate. The sequence is that of Lysine--tRNA ligase from Thermosynechococcus vestitus (strain NIES-2133 / IAM M-273 / BP-1).